We begin with the raw amino-acid sequence, 337 residues long: Glyceraldehyde-3-phosphate dehydrogenase (337 aa).

NAD(+) contacts are provided by residues 17–18, aspartate 39, lysine 83, and serine 125; that span reads RI. Residues 156–158, threonine 187, arginine 202, 215–216, and arginine 238 each bind D-glyceraldehyde 3-phosphate; these read SCT and TG. Cysteine 157 acts as the Nucleophile in catalysis. NAD(+) is bound at residue asparagine 319.

It belongs to the glyceraldehyde-3-phosphate dehydrogenase family. Homotetramer.

The protein resides in the cytoplasm. It carries out the reaction D-glyceraldehyde 3-phosphate + phosphate + NAD(+) = (2R)-3-phospho-glyceroyl phosphate + NADH + H(+). Its pathway is carbohydrate degradation; glycolysis; pyruvate from D-glyceraldehyde 3-phosphate: step 1/5. Its function is as follows. Catalyzes the oxidative phosphorylation of glyceraldehyde 3-phosphate (G3P) to 1,3-bisphosphoglycerate (BPG) using the cofactor NAD. The first reaction step involves the formation of a hemiacetal intermediate between G3P and a cysteine residue, and this hemiacetal intermediate is then oxidized to a thioester, with concomitant reduction of NAD to NADH. The reduced NADH is then exchanged with the second NAD, and the thioester is attacked by a nucleophilic inorganic phosphate to produce BPG. This Mycoplasma pneumoniae (strain ATCC 29342 / M129 / Subtype 1) (Mycoplasmoides pneumoniae) protein is Glyceraldehyde-3-phosphate dehydrogenase (gapA).